Here is a 160-residue protein sequence, read N- to C-terminus: S-ribosylhomocysteine lyase (160 aa).

Residues His-57, His-61, and Cys-127 each contribute to the Fe cation site.

It belongs to the LuxS family. In terms of assembly, homodimer. Fe cation serves as cofactor.

It catalyses the reaction S-(5-deoxy-D-ribos-5-yl)-L-homocysteine = (S)-4,5-dihydroxypentane-2,3-dione + L-homocysteine. In terms of biological role, involved in the synthesis of autoinducer 2 (AI-2) which is secreted by bacteria and is used to communicate both the cell density and the metabolic potential of the environment. The regulation of gene expression in response to changes in cell density is called quorum sensing. Catalyzes the transformation of S-ribosylhomocysteine (RHC) to homocysteine (HC) and 4,5-dihydroxy-2,3-pentadione (DPD). This is S-ribosylhomocysteine lyase from Streptococcus pyogenes serotype M4 (strain MGAS10750).